A 289-amino-acid chain; its full sequence is Acetyl-coenzyme A carboxylase carboxyl transferase subunit beta (289 aa).

Positions 28–289 (VMTKCPECKK…QGGGMAVWQS (262 aa)) constitute a CoA carboxyltransferase N-terminal domain. Zn(2+)-binding residues include Cys-32, Cys-35, Cys-51, and Cys-54. The C4-type zinc finger occupies 32 to 54 (CPECKKIMYTKELLKNLKVCVNC).

Belongs to the AccD/PCCB family. In terms of assembly, acetyl-CoA carboxylase is a heterohexamer composed of biotin carboxyl carrier protein (AccB), biotin carboxylase (AccC) and two subunits each of ACCase subunit alpha (AccA) and ACCase subunit beta (AccD). Zn(2+) is required as a cofactor.

Its subcellular location is the cytoplasm. The catalysed reaction is N(6)-carboxybiotinyl-L-lysyl-[protein] + acetyl-CoA = N(6)-biotinyl-L-lysyl-[protein] + malonyl-CoA. The protein operates within lipid metabolism; malonyl-CoA biosynthesis; malonyl-CoA from acetyl-CoA: step 1/1. Functionally, component of the acetyl coenzyme A carboxylase (ACC) complex. Biotin carboxylase (BC) catalyzes the carboxylation of biotin on its carrier protein (BCCP) and then the CO(2) group is transferred by the transcarboxylase to acetyl-CoA to form malonyl-CoA. This is Acetyl-coenzyme A carboxylase carboxyl transferase subunit beta from Bacillus cereus (strain G9842).